Consider the following 550-residue polypeptide: MSANCVSAAPTSPKNSDVEEIRKSATYHSSVWGNHFLSYTSDVTEITAAEKEQLEKLKEKVKNLLAQTPDESTGKMELIDAIQRLGVGYHFTTEIQESLRQIHEGQIRNDDDDVRVVALRFRLLRQGGYRAPCDVFEKFMDDGGNFKESLKKDVEGMLSLYEASYYGIDGEEIMDKALEFSSSHLESMLHNISTKTNKSLLRRLQEALDTPISKAAIRLGATKFISTYREDESHNEDILNFAKLDFNILQKMHQEEANYLTRWWEDLDLASKLDFARDRMVESYFWSLGVYFQPQYRTSRIYLTKIISIVAVIDDIYDVYGSFDDLRSFTDVIQSWKISNADELPPYMRICFEALLGIYEDMGDRIGAPYAIDTMKELVDTYMQEAEWCYTEYVPTVDEYMKVALVTGGYLMVATTFLTGINNITKKDFDWIRNRPRLLQVAEVLTRLMDDIAGHGTEKKTTAVSCYMKEYECSEMEASRELSKQVKKAWKDLNDEWMEPRSSSAEIIGCIVNMSRVLHIMYSTGDDGFSDSSTRTTQAVKTLLVDHPMN.

Mg(2+) is bound by residues Asp-314, Asp-318, Asp-450, and Glu-458. A DDXXD motif motif is present at residues Asp-314–Asp-318.

This sequence belongs to the terpene synthase family. Mg(2+) is required as a cofactor. Requires Mn(2+) as cofactor.

The catalysed reaction is (2E,6E)-farnesyl diphosphate = (+)-beta-selinene + diphosphate. The enzyme catalyses (2E,6E)-farnesyl diphosphate = alpha-selinene + diphosphate. It functions in the pathway secondary metabolite biosynthesis; terpenoid biosynthesis. Functionally, sesquiterpene synthase that catalyzes the formation of alpha- and beta-selinene from trans,trans-farnesyl diphosphate (FPP). Also produces some nerolidol. The sequence is that of Selinene synthase (SES) from Ocimum basilicum (Sweet basil).